Consider the following 773-residue polypeptide: Ethylene receptor 2 (773 aa).

The next 4 helical transmembrane spans lie at 4–24 (EIAS…VLAI), 53–73 (VSDF…LYFV), 82–102 (WVLF…LLHG), and 122–142 (LTAL…PLLL). 2 residues coordinate Cu cation: Cys-94 and His-98. One can recognise a GAF domain in the interval 187 to 331 (DRHTILYTTL…VVADQVTVAL (145 aa)). The region spanning 374–614 (TMSEGMRRPM…PETMSLLLRF (241 aa)) is the Histidine kinase domain. The Response regulatory domain maps to 647–766 (QVLLVDTNDS…AMESELRRVL (120 aa)). At Asp-702 the chain carries 4-aspartylphosphate. A Glycyl lysine isopeptide (Lys-Gly) (interchain with G-Cter in ubiquitin) cross-link involves residue Lys-751.

The protein belongs to the ethylene receptor family. As to quaternary structure, heteromer with ETR1. Binds to MRF3/ECIP1. Requires Cu cation as cofactor. In terms of processing, autophosphorylated predominantly on Ser residues. In terms of tissue distribution, expressed in seedlings, roots, leaves, flowers, mature siliques, shoot apical meristems, leaf primordia, inflorescence meristems, young floral meristems, developing petals, carpels and ovules. Low expression in stamens.

It is found in the endoplasmic reticulum membrane. In terms of biological role, ethylene receptor related to bacterial two-component regulators. Acts as a redundant negative regulator of ethylene signaling. The chain is Ethylene receptor 2 from Arabidopsis thaliana (Mouse-ear cress).